A 237-amino-acid chain; its full sequence is NAD-dependent protein deacylase (237 aa).

In terms of domain architecture, Deacetylase sirtuin-type spans 1-235 (MRIAVLSGAG…PGLLQRLPAL (235 aa)). 8 to 28 (GAGISAESGVPTFRDDKNGLW) is an NAD(+) binding site. The substrate site is built by Tyr53 and Arg56. 86–89 (QNVD) lines the NAD(+) pocket. His104 functions as the Proton acceptor in the catalytic mechanism. Residues Cys112, Cys115, Cys138, and Cys140 each coordinate Zn(2+). NAD(+)-binding positions include 177 to 179 (GTS), 203 to 205 (NPE), and Ala221.

This sequence belongs to the sirtuin family. Class III subfamily. Zn(2+) serves as cofactor.

Its subcellular location is the cytoplasm. It carries out the reaction N(6)-acetyl-L-lysyl-[protein] + NAD(+) + H2O = 2''-O-acetyl-ADP-D-ribose + nicotinamide + L-lysyl-[protein]. It catalyses the reaction N(6)-succinyl-L-lysyl-[protein] + NAD(+) + H2O = 2''-O-succinyl-ADP-D-ribose + nicotinamide + L-lysyl-[protein]. In terms of biological role, NAD-dependent lysine deacetylase and desuccinylase that specifically removes acetyl and succinyl groups on target proteins. Modulates the activities of several proteins which are inactive in their acylated form. In Mycolicibacterium paratuberculosis (strain ATCC BAA-968 / K-10) (Mycobacterium paratuberculosis), this protein is NAD-dependent protein deacylase.